The chain runs to 86 residues: Mu-theraphotoxin-Hhn1b 1 (86 aa).

Positions 1–21 are cleaved as a signal peptide; sequence MKASMFLALAGLALLFVVCYA. The propeptide occupies 22–49; sequence SESEEKEFSNELLSSVLAVDDNSKGEER. 3 disulfides stabilise this stretch: C51–C66, C58–C73, and C65–C80. The residue at position 84 (I84) is an Isoleucine amide.

This sequence belongs to the neurotoxin 10 (Hwtx-1) family. 22 (Htx-4) subfamily. In terms of assembly, monomer. In terms of tissue distribution, expressed by the venom gland.

Its subcellular location is the secreted. Functionally, neurotoxin that selectively inhibits neuronal tetrodotoxin-sensitive voltage-gated sodium channels (Nav) (IC(50)=44.6 nM). It is active on Nav1.2/SCN2A (IC(50)=22.4 nM), Nav1.6/SCN8A (IC(50)=50.1 nM) and Nav1.7/SCN9A (IC(50)=48.9 nM). It shows low affinity for lipid bilayers. This chain is Mu-theraphotoxin-Hhn1b 1, found in Cyriopagopus hainanus (Chinese bird spider).